The primary structure comprises 180 residues: Crossover junction endodeoxyribonuclease RuvC (180 aa).

Active-site residues include D7, E66, and D138. D7, E66, and D138 together coordinate Mg(2+).

It belongs to the RuvC family. As to quaternary structure, homodimer which binds Holliday junction (HJ) DNA. The HJ becomes 2-fold symmetrical on binding to RuvC with unstacked arms; it has a different conformation from HJ DNA in complex with RuvA. In the full resolvosome a probable DNA-RuvA(4)-RuvB(12)-RuvC(2) complex forms which resolves the HJ. It depends on Mg(2+) as a cofactor.

It is found in the cytoplasm. The catalysed reaction is Endonucleolytic cleavage at a junction such as a reciprocal single-stranded crossover between two homologous DNA duplexes (Holliday junction).. Its function is as follows. The RuvA-RuvB-RuvC complex processes Holliday junction (HJ) DNA during genetic recombination and DNA repair. Endonuclease that resolves HJ intermediates. Cleaves cruciform DNA by making single-stranded nicks across the HJ at symmetrical positions within the homologous arms, yielding a 5'-phosphate and a 3'-hydroxyl group; requires a central core of homology in the junction. The consensus cleavage sequence is 5'-(A/T)TT(C/G)-3'. Cleavage occurs on the 3'-side of the TT dinucleotide at the point of strand exchange. HJ branch migration catalyzed by RuvA-RuvB allows RuvC to scan DNA until it finds its consensus sequence, where it cleaves and resolves the cruciform DNA. This Paraburkholderia xenovorans (strain LB400) protein is Crossover junction endodeoxyribonuclease RuvC.